The primary structure comprises 409 residues: Snake venom metalloproteinase BITM02A (409 aa).

Positions 1-20 (MIEVLLVTICLAAFPYQGSS) are cleaved as a signal peptide. The propeptide occupies 21-189 (IILESGNVND…KKASQSNLTP (169 aa)). The Peptidase M12B domain maps to 193 to 389 (RYIELFIVVD…ENPQCILNKR (197 aa)). Residues E196 and D280 each contribute to the Ca(2+) site. Cystine bridges form between C304–C384, C344–C368, and C346–C351. H329 serves as a coordination point for Zn(2+). E330 is an active-site residue. Residues H333 and H339 each contribute to the Zn(2+) site. 7 residues coordinate Ca(2+): C384, N387, V399, N402, L404, E406, and E409. Residues 390-409 (LRTDTVSTPVSGNELLEAGE) constitute a propeptide that is removed on maturation.

This sequence belongs to the venom metalloproteinase (M12B) family. P-I subfamily. As to quaternary structure, monomer. The cofactor is Zn(2+). In terms of tissue distribution, expressed by the venom gland.

The protein resides in the secreted. Functionally, snake venom metalloproteinase that impairs hemostasis in the envenomed animal. The polypeptide is Snake venom metalloproteinase BITM02A (Bothrops insularis (Golden lancehead)).